Consider the following 432-residue polypeptide: Amino-acid acetyltransferase (432 aa).

In terms of domain architecture, N-acetyltransferase spans 286-432 (EVVREATIED…RNSKIFEKPL (147 aa)).

Belongs to the acetyltransferase family. ArgA subfamily.

It localises to the cytoplasm. It carries out the reaction L-glutamate + acetyl-CoA = N-acetyl-L-glutamate + CoA + H(+). The protein operates within amino-acid biosynthesis; L-arginine biosynthesis; N(2)-acetyl-L-ornithine from L-glutamate: step 1/4. In Pseudomonas putida (strain ATCC 47054 / DSM 6125 / CFBP 8728 / NCIMB 11950 / KT2440), this protein is Amino-acid acetyltransferase (argA).